The sequence spans 119 residues: MLHWGPKYWRALHLYAIFFSDAPGWKEKYEAIQWILNFIESLPCTRCRHHAFSYLTKNPLTLNNSEDFQYWTFAFHNNVNNRLNKKIISWSEYKNIYEQSILKTIEYGKTDFIGAWSSL.

Residues 1–97 (MLHWGPKYWR…ISWSEYKNIY (97 aa)) enclose the ERV/ALR sulfhydryl oxidase domain. Cysteines 44 and 47 form a disulfide.

It belongs to the asfivirus B119L family. Interacts with A151R. FAD is required as a cofactor.

It is found in the host cytoplasm. Its subcellular location is the virion. It carries out the reaction 2 R'C(R)SH + O2 = R'C(R)S-S(R)CR' + H2O2. FAD-dependent sulfhydryl oxidase that catalyzes the formation of disulfide bonds in viral proteins produced in the cell cytoplasm. Involved in virion maturation. In African swine fever virus (isolate Warthog/Namibia/Wart80/1980) (ASFV), this protein is FAD-linked sulfhydryl oxidase.